The primary structure comprises 251 residues: Ditrans,polycis-undecaprenyl-diphosphate synthase ((2E,6E)-farnesyl-diphosphate specific) (251 aa).

The active site involves D20. D20 lines the Mg(2+) pocket. Substrate contacts are provided by residues 21 to 24, W25, R33, H37, and 65 to 67; these read GNGR and SSE. N68 (proton acceptor) is an active-site residue. Substrate contacts are provided by residues W69, R71, R188, and 194–196; that span reads RIS. E207 contributes to the Mg(2+) binding site.

It belongs to the UPP synthase family. As to quaternary structure, homodimer. Requires Mg(2+) as cofactor.

It catalyses the reaction 8 isopentenyl diphosphate + (2E,6E)-farnesyl diphosphate = di-trans,octa-cis-undecaprenyl diphosphate + 8 diphosphate. Functionally, catalyzes the sequential condensation of isopentenyl diphosphate (IPP) with (2E,6E)-farnesyl diphosphate (E,E-FPP) to yield (2Z,6Z,10Z,14Z,18Z,22Z,26Z,30Z,34E,38E)-undecaprenyl diphosphate (di-trans,octa-cis-UPP). UPP is the precursor of glycosyl carrier lipid in the biosynthesis of bacterial cell wall polysaccharide components such as peptidoglycan and lipopolysaccharide. The sequence is that of Ditrans,polycis-undecaprenyl-diphosphate synthase ((2E,6E)-farnesyl-diphosphate specific) from Vibrio vulnificus (strain CMCP6).